The following is a 327-amino-acid chain: Complex I intermediate-associated protein 30, mitochondrial (327 aa).

Residues 1–24 constitute a mitochondrion transit peptide; the sequence is MALVHKLLRGTYFLRKFXKPTSAL. The disordered stretch occupies residues 42–63; it reads PVASPGKASSQRKTEGDLQGDH. Positions 53–63 are enriched in basic and acidic residues; that stretch reads RKTEGDLQGDH. Ser-318 bears the Phosphoserine mark.

It belongs to the CIA30 family. Part of the mitochondrial complex I assembly/MCIA complex that comprises at least the core subunits TMEM126B, NDUFAF1, ECSIT and ACAD9 and complement subunits such as COA1 and TMEM186. Interacts with ECSIT. Interacts with ACAD9. At early stages of complex I assembly, it is found in intermediate subcomplexes that contain different subunits including NDUFB6, NDUFA6, NDUFA9, NDUFS3, NDUFS7, ND1, ND2 and ND3. Interacts with TMEM70 and TMEM242.

The protein localises to the mitochondrion. It localises to the mitochondrion matrix. Functionally, as part of the MCIA complex, involved in the assembly of the mitochondrial complex I. In Pan troglodytes (Chimpanzee), this protein is Complex I intermediate-associated protein 30, mitochondrial.